A 347-amino-acid chain; its full sequence is Cytosolic sulfotransferase 14 (347 aa).

Residue 87 to 92 (KSGTTW) participates in 3'-phosphoadenylyl sulfate binding. Histidine 155 serves as the catalytic Proton acceptor. Residues arginine 177, serine 185, tyrosine 244, and 310 to 312 (RKG) contribute to the 3'-phosphoadenylyl sulfate site.

This sequence belongs to the sulfotransferase 1 family.

The protein resides in the cytoplasm. In terms of biological role, sulfotransferase that utilizes 3'-phospho-5'-adenylyl sulfate (PAPS) as sulfonate donor. Not active with 11-hydroxyjasmonate or 12-hydroxyjasmonate. The protein is Cytosolic sulfotransferase 14 (SOT14) of Arabidopsis thaliana (Mouse-ear cress).